Reading from the N-terminus, the 342-residue chain is MQNAGLSPTPSLRALGGLAMAALLSTVWLWWRLGAAPGGAPAPQPTTTILVWHWPFASQPPELPGDTCTRYGVARCRLTVNRSLLAGADAVVFHHRELQTQQARLPLAERPRGQPWVWASMESPSHTRGLGRLRGVFNWVLSYRRDSDIFVPYGRLEPREGPAPPLPAKRGLAAWVVSNFQKRQRRVQLYRQLALHLRVDVFGRAAGQPLCASCLLRAVAGYRFYLSFENSEHRDYITEKFWRNALLAGAVPVVLGPPRAAYEAVAPPDAFVHVDDFGSARELAAFLTSMNESCYRRYFAWRDRFRVRLFSDWRERFCAICARFPQLPRGQVYQDLEGWFQA.

Topologically, residues 1-11 are cytoplasmic; the sequence is MQNAGLSPTPS. A helical; Signal-anchor for type II membrane protein transmembrane segment spans residues 12–31; that stretch reads LRALGGLAMAALLSTVWLWW. Topologically, residues 32-342 are extracellular; the sequence is RLGAAPGGAP…YQDLEGWFQA (311 aa). The cysteines at positions 68 and 76 are disulfide-linked. An N-linked (GlcNAc...) asparagine glycan is attached at N81. C211 and C214 form a disulfide bridge. A glycan (N-linked (GlcNAc...) asparagine) is linked at N291. A disulfide bridge links C318 with C321.

This sequence belongs to the glycosyltransferase 10 family. N-glycosylated. In terms of tissue distribution, expressed in thymus, spleen, liver and lung. Highly expressed in the thymus and lower expressed in the lung.

It is found in the membrane. It carries out the reaction an N-acetyl-alpha-neuraminyl-(2-&gt;3)-beta-D-galactosyl-(1-&gt;4)-N-acetyl-beta-D-glucosaminyl derivative + GDP-beta-L-fucose = an alpha-Neu5Ac-(2-&gt;3)-beta-D-Gal-(1-&gt;4)-[alpha-L-Fuc-(1-&gt;3)]-beta-D-GlcNAc derivative + GDP + H(+). It catalyses the reaction a neolactoside IV(3)-alpha-NeuAc-nLc4Cer + GDP-beta-L-fucose = a neolactoside IV(3)-alpha-NeuNAc,III(3)-alpha-Fuc-nLc4Cer + GDP + H(+). The catalysed reaction is a neolactoside VI(3)-alpha-NeuNAc-nLc6Cer + GDP-beta-L-fucose = a neolactoside VI(3)-alpha-NeuAc,V(3)-alphaFuc-nLc6Cer + GDP + H(+). The enzyme catalyses an alpha-Neu5Ac-(2-&gt;3)-beta-D-Gal-(1-&gt;4)-beta-D-GlcNAc-(1-&gt;3)-beta-D-Gal-(1-&gt;4)-[alpha-L-Fuc-(1-&gt;3)]-beta-D-GlcNAc derivative + GDP-beta-L-fucose = an alpha-Neu5Ac-(2-&gt;3)-beta-D-Gal-(1-&gt;4)-[alpha-L-Fuc-(1-&gt;3)]-beta-D-GlcNAc-(1-&gt;3)-beta-D-Gal-(1-&gt;4)-[alpha-L-Fuc-(1-&gt;3)]-beta-D-GlcNAc derivative + GDP + H(+). It carries out the reaction an alpha-Neu5Ac-(2-&gt;3)-beta-D-Gal-(1-&gt;4)-beta-D-GlcNAc6S derivative + GDP-beta-L-fucose = an alpha-Neu5Ac-(2-&gt;3)-beta-D-Gal-(1-&gt;4)-[alpha-L-Fuc-(1-&gt;3)]-beta-D-GlcNAc6S derivative + GDP + H(+). It catalyses the reaction alpha-Neu5Ac-(2-&gt;3)-beta-D-Gal-(1-&gt;4)-beta-D-GlcNAc-(1-&gt;3)-beta-D-Gal-(1-&gt;4)-D-Glc + GDP-beta-L-fucose = alpha-Neu5Ac-(2-&gt;3)-beta-D-Gal-(1-&gt;4)-[alpha-L-Fuc-(1-&gt;3)]-beta-D-GlcNAc-(1-&gt;3)-beta-D-Gal-(1-&gt;4)-D-Glc + GDP + H(+). The catalysed reaction is alpha-Neu5Ac-(2-&gt;3)-beta-D-Gal-(1-&gt;4)-beta-D-GlcNAc-(1-&gt;3)-beta-D-Gal-(1-&gt;4)-[alpha-L-Fuc-(1-&gt;3)]-beta-D-GlcNAc-(1-&gt;3)-beta-D-Gal-(1-&gt;4)-beta-D-GlcNAc + GDP-beta-L-fucose = alpha-Neu5Ac-(2-&gt;3)-beta-D-Gal-(1-&gt;4)-[alpha-L-Fuc-(1-&gt;3)]-beta-D-GlcNAc-(1-&gt;3)-beta-D-Gal-(1-&gt;4)-[alpha-L-Fuc-(1-&gt;3)]-beta-D-GlcNAc-(1-&gt;3)-beta-D-Gal-(1-&gt;4)-beta-D-GlcNAc + GDP + H(+). The enzyme catalyses alpha-Neu5Ac-(2-&gt;3)-beta-D-Gal-(1-&gt;4)-beta-D-GlcNAc-(1-&gt;3)-beta-D-Gal-(1-&gt;4)-beta-D-GlcNAc-(1-&gt;3)-beta-D-Gal-(1-&gt;4)-beta-D-GlcNAc + GDP-beta-L-fucose = alpha-Neu5Ac-(2-&gt;3)-beta-D-Gal-(1-&gt;4)-[alpha-L-Fuc-(1-&gt;3)]-beta-D-GlcNAc-(1-&gt;3)-beta-D-Gal-(1-&gt;4)-beta-D-GlcNAc-(1-&gt;3)-beta-D-Gal-(1-&gt;4)-beta-D-GlcNAc + GDP + H(+). Its pathway is protein modification; protein glycosylation. With respect to regulation, inhibited by NaCl. Inhibited by GDP in a concentration dependent manner, with an IC(50) value of 93 uM. Also inhibited by GMP and GTP. Inhibited by N-ethylmaleimide. Activated by poly(ethylene glycol) by enhancing the thermal stability of FUT7. Activated by Mn2+, Ca2+, and Mg2+. Both panosialin A and B inhibit activity with IC(50) values of 4.8 and 5.3 ug/ml, respectively. Inhibited by gallic acid (GA) and (-)-epigallocatechin gallate (EGCG) in a time-dependent and irreversible manner with IC(50) values of 60 and 700 nM, respectively. Functionally, catalyzes the transfer of L-fucose, from a guanosine diphosphate-beta-L-fucose, to the N-acetyl glucosamine (GlcNAc) of a distal alpha2,3 sialylated lactosamine unit of a glycoprotein or a glycolipid-linked sialopolylactosamines chain through an alpha-1,3 glycosidic linkage and participates in the final fucosylation step in the biosynthesis of the sialyl Lewis X (sLe(x)), a carbohydrate involved in cell and matrix adhesion during leukocyte trafficking and fertilization. In vitro, also synthesizes sialyl-dimeric-Lex structures, from VIM-2 structures and both di-fucosylated and trifucosylated structures from mono-fucosylated precursors. However does not catalyze alpha 1-3 fucosylation when an internal alpha 1-3 fucosylation is present in polylactosamine chain and the fucosylation rate of the internal GlcNAc residues is reduced once fucose has been added to the distal GlcNAc. Also catalyzes the transfer of a fucose from GDP-beta-fucose to the 6-sulfated a(2,3)sialylated substrate to produce 6-sulfo sLex mediating significant L-selectin-dependent cell adhesion. Through sialyl-Lewis(x) biosynthesis, can control SELE- and SELP-mediated cell adhesion with leukocytes and allows leukocytes tethering and rolling along the endothelial tissue thereby enabling the leukocytes to accumulate at a site of inflammation. May enhance embryo implantation through sialyl Lewis X (sLeX)-mediated adhesion of embryo cells to endometrium. May affect insulin signaling by up-regulating the phosphorylation and expression of some signaling molecules involved in the insulin-signaling pathway through SLe(x) which is present on the glycans of the INSRR alpha subunit. The chain is Alpha-(1,3)-fucosyltransferase 7 from Bos taurus (Bovine).